The chain runs to 184 residues: ATP synthase subunit b, chloroplastic (184 aa).

Residues 27-49 traverse the membrane as a helical segment; sequence LATNPINLSVVLGVLIFFGKGVL.

Belongs to the ATPase B chain family. In terms of assembly, F-type ATPases have 2 components, F(1) - the catalytic core - and F(0) - the membrane proton channel. F(1) has five subunits: alpha(3), beta(3), gamma(1), delta(1), epsilon(1). F(0) has four main subunits: a(1), b(1), b'(1) and c(10-14). The alpha and beta chains form an alternating ring which encloses part of the gamma chain. F(1) is attached to F(0) by a central stalk formed by the gamma and epsilon chains, while a peripheral stalk is formed by the delta, b and b' chains.

The protein resides in the plastid. Its subcellular location is the chloroplast thylakoid membrane. In terms of biological role, f(1)F(0) ATP synthase produces ATP from ADP in the presence of a proton or sodium gradient. F-type ATPases consist of two structural domains, F(1) containing the extramembraneous catalytic core and F(0) containing the membrane proton channel, linked together by a central stalk and a peripheral stalk. During catalysis, ATP synthesis in the catalytic domain of F(1) is coupled via a rotary mechanism of the central stalk subunits to proton translocation. Functionally, component of the F(0) channel, it forms part of the peripheral stalk, linking F(1) to F(0). The sequence is that of ATP synthase subunit b, chloroplastic from Eucalyptus globulus subsp. globulus (Tasmanian blue gum).